Consider the following 211-residue polypeptide: MTLVAFDFDGTLAESEMLDRIAARAGVGDEVAAITERAMRGELSYADSLRERAQLVAGLPESAAAAVYDGVRLRDGAGDLVAKLRDGGVRVVVLTGGFKPGVAAAFDAAGVAADGVVGNRLVAADGELTGAVEGPLVEGTKDDALRDACEAAGTTPAAAVAVGDGANDVPMLDAAGTAIGVDPKPGVDAHCDHTVSSMDALGRVLDDHGIA.

Residue Asp-7 is the Nucleophile of the active site. Mg(2+)-binding residues include Asp-7 and Asp-9. Asp-9 serves as the catalytic Proton donor. Substrate is bound by residues Glu-16, Arg-52, 95–96, and Lys-141; that span reads TG. Mg(2+) is bound at residue Asp-164. Asn-167 contributes to the substrate binding site.

This sequence belongs to the HAD-like hydrolase superfamily. SerB family. The cofactor is Mg(2+).

It carries out the reaction O-phospho-L-serine + H2O = L-serine + phosphate. It catalyses the reaction O-phospho-D-serine + H2O = D-serine + phosphate. It participates in amino-acid biosynthesis; L-serine biosynthesis; L-serine from 3-phospho-D-glycerate: step 3/3. Functionally, catalyzes the dephosphorylation of phosphoserine (P-Ser). This is Phosphoserine phosphatase (serB) from Halobacterium salinarum (strain ATCC 29341 / DSM 671 / R1).